Here is a 368-residue protein sequence, read N- to C-terminus: tRNA 2-selenouridine synthase (368 aa).

Residues 12–136 form the Rhodanese domain; the sequence is FLGDAPLLDT…MRGFLLETIE (125 aa). C95 functions as the S-selanylcysteine intermediate in the catalytic mechanism.

Belongs to the SelU family. In terms of assembly, monomer.

The enzyme catalyses 5-methylaminomethyl-2-thiouridine(34) in tRNA + selenophosphate + (2E)-geranyl diphosphate + H2O + H(+) = 5-methylaminomethyl-2-selenouridine(34) in tRNA + (2E)-thiogeraniol + phosphate + diphosphate. It catalyses the reaction 5-methylaminomethyl-2-thiouridine(34) in tRNA + (2E)-geranyl diphosphate = 5-methylaminomethyl-S-(2E)-geranyl-thiouridine(34) in tRNA + diphosphate. It carries out the reaction 5-methylaminomethyl-S-(2E)-geranyl-thiouridine(34) in tRNA + selenophosphate + H(+) = 5-methylaminomethyl-2-(Se-phospho)selenouridine(34) in tRNA + (2E)-thiogeraniol. The catalysed reaction is 5-methylaminomethyl-2-(Se-phospho)selenouridine(34) in tRNA + H2O = 5-methylaminomethyl-2-selenouridine(34) in tRNA + phosphate. Functionally, involved in the post-transcriptional modification of the uridine at the wobble position (U34) of tRNA(Lys), tRNA(Glu) and tRNA(Gln). Catalyzes the conversion of 2-thiouridine (S2U-RNA) to 2-selenouridine (Se2U-RNA). Acts in a two-step process involving geranylation of 2-thiouridine (S2U) to S-geranyl-2-thiouridine (geS2U) and subsequent selenation of the latter derivative to 2-selenouridine (Se2U) in the tRNA chain. In Bordetella bronchiseptica (strain ATCC BAA-588 / NCTC 13252 / RB50) (Alcaligenes bronchisepticus), this protein is tRNA 2-selenouridine synthase.